We begin with the raw amino-acid sequence, 464 residues long: Argininosuccinate lyase (464 aa).

The protein belongs to the lyase 1 family. Argininosuccinate lyase subfamily.

It is found in the cytoplasm. It carries out the reaction 2-(N(omega)-L-arginino)succinate = fumarate + L-arginine. Its pathway is amino-acid biosynthesis; L-arginine biosynthesis; L-arginine from L-ornithine and carbamoyl phosphate: step 3/3. This is Argininosuccinate lyase from Herminiimonas arsenicoxydans.